The sequence spans 392 residues: Chloramphenicol resistance protein (392 aa).

Helical transmembrane passes span Tyr6 to Val26, Thr42 to Ala62, Leu71 to Phe91, Val100 to Val120, Leu129 to Leu149, Phe160 to Ala180, Leu205 to Phe225, Leu239 to Ala259, Ala268 to Leu288, Ala294 to Ile314, Ala332 to Gly352, and Leu358 to Phe378.

The protein belongs to the major facilitator superfamily.

Its subcellular location is the cell membrane. This is Chloramphenicol resistance protein (cmlR) from Streptomyces lividans.